The chain runs to 334 residues: Phosphate acyltransferase (334 aa).

The protein belongs to the PlsX family. As to quaternary structure, homodimer. Probably interacts with PlsY.

The protein localises to the cytoplasm. The enzyme catalyses a fatty acyl-[ACP] + phosphate = an acyl phosphate + holo-[ACP]. It functions in the pathway lipid metabolism; phospholipid metabolism. Its function is as follows. Catalyzes the reversible formation of acyl-phosphate (acyl-PO(4)) from acyl-[acyl-carrier-protein] (acyl-ACP). This enzyme utilizes acyl-ACP as fatty acyl donor, but not acyl-CoA. This chain is Phosphate acyltransferase, found in Acholeplasma laidlawii (strain PG-8A).